The primary structure comprises 334 residues: Holliday junction branch migration complex subunit RuvB (334 aa).

The tract at residues 4–184 (ADRLIQPQLQ…FGIPLRLEFY (181 aa)) is large ATPase domain (RuvB-L). ATP is bound by residues Arg-24, Gly-65, Lys-68, Thr-69, Thr-70, 131–133 (EDY), Arg-174, Tyr-184, and Arg-221. Residue Thr-69 coordinates Mg(2+). Positions 185-255 (NIKDLSTIVT…VADHALDLLD (71 aa)) are small ATPAse domain (RuvB-S). The tract at residues 258–334 (NEGFDYMDRK…YQHFQLIKPE (77 aa)) is head domain (RuvB-H). Residues Arg-294, Arg-313, and Arg-318 each contribute to the DNA site.

It belongs to the RuvB family. As to quaternary structure, homohexamer. Forms an RuvA(8)-RuvB(12)-Holliday junction (HJ) complex. HJ DNA is sandwiched between 2 RuvA tetramers; dsDNA enters through RuvA and exits via RuvB. An RuvB hexamer assembles on each DNA strand where it exits the tetramer. Each RuvB hexamer is contacted by two RuvA subunits (via domain III) on 2 adjacent RuvB subunits; this complex drives branch migration. In the full resolvosome a probable DNA-RuvA(4)-RuvB(12)-RuvC(2) complex forms which resolves the HJ.

It localises to the cytoplasm. The catalysed reaction is ATP + H2O = ADP + phosphate + H(+). In terms of biological role, the RuvA-RuvB-RuvC complex processes Holliday junction (HJ) DNA during genetic recombination and DNA repair, while the RuvA-RuvB complex plays an important role in the rescue of blocked DNA replication forks via replication fork reversal (RFR). RuvA specifically binds to HJ cruciform DNA, conferring on it an open structure. The RuvB hexamer acts as an ATP-dependent pump, pulling dsDNA into and through the RuvAB complex. RuvB forms 2 homohexamers on either side of HJ DNA bound by 1 or 2 RuvA tetramers; 4 subunits per hexamer contact DNA at a time. Coordinated motions by a converter formed by DNA-disengaged RuvB subunits stimulates ATP hydrolysis and nucleotide exchange. Immobilization of the converter enables RuvB to convert the ATP-contained energy into a lever motion, pulling 2 nucleotides of DNA out of the RuvA tetramer per ATP hydrolyzed, thus driving DNA branch migration. The RuvB motors rotate together with the DNA substrate, which together with the progressing nucleotide cycle form the mechanistic basis for DNA recombination by continuous HJ branch migration. Branch migration allows RuvC to scan DNA until it finds its consensus sequence, where it cleaves and resolves cruciform DNA. In Shewanella putrefaciens (strain CN-32 / ATCC BAA-453), this protein is Holliday junction branch migration complex subunit RuvB.